The following is a 277-amino-acid chain: Ubiquinone biosynthesis protein COQ4, mitochondrial (277 aa).

Residues 1-14 (MLTKRALRTTDPYR) constitute a mitochondrion transit peptide. Residues His-157, Asp-158, His-161, and Glu-173 each coordinate Zn(2+).

This sequence belongs to the COQ4 family. Component of a multi-subunit COQ enzyme complex, composed of at least COQ3, COQ4, COQ5, COQ6, COQ7 and COQ9. Zn(2+) serves as cofactor.

It localises to the mitochondrion inner membrane. It carries out the reaction a 4-hydroxy-3-methoxy-5-(all-trans-polyprenyl)benzoate + H(+) = a 2-methoxy-6-(all-trans-polyprenyl)phenol + CO2. Its pathway is cofactor biosynthesis; ubiquinone biosynthesis. Lyase that catalyzes the C1-decarboxylation of 4-hydroxy-3-methoxy-5-(all-trans-polyprenyl)benzoic acid into 2-methoxy-6-(all-trans-polyprenyl)phenol during ubiquinone biosynthesis. This is Ubiquinone biosynthesis protein COQ4, mitochondrial from Ajellomyces capsulatus (strain NAm1 / WU24) (Darling's disease fungus).